The following is a 437-amino-acid chain: Transcription factor E2F2 (437 aa).

A cyclin A/CDK2 binding region spans residues 65 to 105 (ATPHGPEGQVVRCLPAGRLPAKRKLDLEGIGRPVVPEFPTP). A DNA-binding region spans residues 107–196 (GKCIRVDGLP…KNNIQWVGRG (90 aa)). The segment at 155-176 (LNWAAEVLDVQKRRIYDITNVL) is leucine-zipper. A DEF box motif is present at residues 160-196 (EVLDVQKRRIYDITNVLEGIQLIRKKAKNNIQWVGRG). Residues 197–289 (MFEDPTRPGK…PDRTEDNLQI (93 aa)) are dimerization. Residues 307–368 (VQEPDSPSEE…APPPPSLVPL (62 aa)) form a disordered region. Positions 315-330 (EEPLPSTSTLCPSPDS) are enriched in low complexity. Over residues 351-365 (APAPTPQQAPPPPSL) the composition is skewed to pro residues. The interval 359 to 437 (APPPPSLVPL…SYDLGDLLIN (79 aa)) is transactivation. Residues 410–427 (DDYLWGLEAGEGISDLFD) are retinoblastoma protein binding.

The protein belongs to the E2F/DP family. Component of the DRTF1/E2F transcription factor complex. Forms heterodimers with DP family members. The E2F2 complex binds specifically hypophosphorylated retinoblastoma protein RB1. During the cell cycle, RB1 becomes phosphorylated in mid-to-late G1 phase, detaches from the DRTF1/E2F complex, rendering E2F transcriptionally active. Viral oncoproteins, notably E1A, T-antigen and HPV E7, are capable of sequestering RB1, thus releasing the active complex. Binds EAPP. Phosphorylated by CDK2 and cyclin A-CDK2 in the S-phase. As to expression, highest level of expression is found in placenta, low levels are found in lung. Found as well in many immortalized cell lines derived from tumor samples.

It is found in the nucleus. In terms of biological role, transcription activator that binds DNA cooperatively with DP proteins through the E2 recognition site, 5'-TTTC[CG]CGC-3' found in the promoter region of a number of genes whose products are involved in cell cycle regulation or in DNA replication. The DRTF1/E2F complex functions in the control of cell-cycle progression from g1 to s phase. E2F2 binds specifically to RB1 in a cell-cycle dependent manner. In Homo sapiens (Human), this protein is Transcription factor E2F2 (E2F2).